Reading from the N-terminus, the 1417-residue chain is DNA-directed RNA polymerase subunit beta' (1417 aa).

Residues Cys68, Cys70, Cys83, and Cys86 each contribute to the Zn(2+) site. Mg(2+)-binding residues include Asp458, Asp460, and Asp462. Residues Cys811, Cys884, Cys891, and Cys894 each contribute to the Zn(2+) site.

It belongs to the RNA polymerase beta' chain family. The RNAP catalytic core consists of 2 alpha, 1 beta, 1 beta' and 1 omega subunit. When a sigma factor is associated with the core the holoenzyme is formed, which can initiate transcription. It depends on Mg(2+) as a cofactor. The cofactor is Zn(2+).

The enzyme catalyses RNA(n) + a ribonucleoside 5'-triphosphate = RNA(n+1) + diphosphate. Functionally, DNA-dependent RNA polymerase catalyzes the transcription of DNA into RNA using the four ribonucleoside triphosphates as substrates. This is DNA-directed RNA polymerase subunit beta' from Francisella tularensis subsp. novicida (strain U112).